The primary structure comprises 24 residues: Homotarsinin (24 aa).

Residue arginine 24 is modified to Arginine amide.

Homodimer; disulfide-linked. As to expression, expressed by the skin glands.

It is found in the secreted. Its function is as follows. Antimicrobial peptide. Active against Gram-negative bacteria E.coli ATCC 25922 (MIC=1.5 uM) and P.aeruginosa ATTC 27853 (MIC=23.2 uM) and against Gram-positive bacterium S.aureus ATCC 29313 (MIC=11.6 uM). Has no hemolytic activity. Associates with and disrupts membranes in vitro. This is Homotarsinin from Phyllomedusa tarsius (Brownbelly leaf frog).